The primary structure comprises 255 residues: MQINTIPVNPTLPRHIAIIMDGNGRWAERRSRPRTTGHRAGVKAAMRTVDFCLEKGIKMLTLFAFSSENWNRPADEVNFLMEMSIKLFGRGIEELHRRGVQVRFIGERKRFDIALVEHMTKAEHLTASNQRLILSLAVSYGGRQDITMAARALAQDVAAGRLKPEQIDEDLLGQHMALADLPPPDMFIRTSGVIRISNFLLWQIAYTELWFTDVMWPEFNSTVLQQALDDYASRERRFGLTNAQIASRGKGSIPA.

Residue Asp21 is part of the active site. Asp21 is a binding site for Mg(2+). Residues 22–25, Trp26, Arg34, His38, and 66–68 each bind substrate; these read GNGR and SSE. The active-site Proton acceptor is the Asn69. Substrate-binding positions include Trp70, Arg72, Arg189, and 195–197; that span reads RIS. Residue Glu208 participates in Mg(2+) binding.

This sequence belongs to the UPP synthase family. In terms of assembly, homodimer. It depends on Mg(2+) as a cofactor.

The enzyme catalyses 8 isopentenyl diphosphate + (2E,6E)-farnesyl diphosphate = di-trans,octa-cis-undecaprenyl diphosphate + 8 diphosphate. Its function is as follows. Catalyzes the sequential condensation of isopentenyl diphosphate (IPP) with (2E,6E)-farnesyl diphosphate (E,E-FPP) to yield (2Z,6Z,10Z,14Z,18Z,22Z,26Z,30Z,34E,38E)-undecaprenyl diphosphate (di-trans,octa-cis-UPP). UPP is the precursor of glycosyl carrier lipid in the biosynthesis of bacterial cell wall polysaccharide components such as peptidoglycan and lipopolysaccharide. This is Ditrans,polycis-undecaprenyl-diphosphate synthase ((2E,6E)-farnesyl-diphosphate specific) from Xylella fastidiosa (strain Temecula1 / ATCC 700964).